We begin with the raw amino-acid sequence, 207 residues long: MSFNDTQEQFAPNMALVPMVIEQTSRGERSYDIYSRLLKERIIFLTGQVEDHMANLIVAQMLFLEAENPEKDINLYINSPGGVITAGMSIYDTMQYIKADVSTICMGQACSMGAFLLSAGAKGKRICLPNSRVMIHQPLGGYQGQATDIQIHAQEILKVKSRMNELMAQHTGKSIEEIERDTERDRFLSANEALEYGLVDKVYTQRS.

The active-site Nucleophile is the serine 111. Histidine 136 is a catalytic residue.

This sequence belongs to the peptidase S14 family. In terms of assembly, fourteen ClpP subunits assemble into 2 heptameric rings which stack back to back to give a disk-like structure with a central cavity, resembling the structure of eukaryotic proteasomes.

It is found in the cytoplasm. The enzyme catalyses Hydrolysis of proteins to small peptides in the presence of ATP and magnesium. alpha-casein is the usual test substrate. In the absence of ATP, only oligopeptides shorter than five residues are hydrolyzed (such as succinyl-Leu-Tyr-|-NHMec, and Leu-Tyr-Leu-|-Tyr-Trp, in which cleavage of the -Tyr-|-Leu- and -Tyr-|-Trp bonds also occurs).. In terms of biological role, cleaves peptides in various proteins in a process that requires ATP hydrolysis. Has a chymotrypsin-like activity. Plays a major role in the degradation of misfolded proteins. The sequence is that of ATP-dependent Clp protease proteolytic subunit from Proteus mirabilis (strain HI4320).